The sequence spans 1380 residues: DNA-directed RNA polymerase subunit beta (1380 aa).

The protein belongs to the RNA polymerase beta chain family. In terms of assembly, the RNAP catalytic core consists of 2 alpha, 1 beta, 1 beta' and 1 omega subunit. When a sigma factor is associated with the core the holoenzyme is formed, which can initiate transcription.

It catalyses the reaction RNA(n) + a ribonucleoside 5'-triphosphate = RNA(n+1) + diphosphate. Functionally, DNA-dependent RNA polymerase catalyzes the transcription of DNA into RNA using the four ribonucleoside triphosphates as substrates. The protein is DNA-directed RNA polymerase subunit beta of Ehrlichia ruminantium (strain Gardel).